We begin with the raw amino-acid sequence, 935 residues long: MLKALFGDPNTRKLNKFQSLVTETNLLEEEIKKLSDEELKRKTDEFREELEKASNDRELEEILDEILPEAFALVREASLRVLGMRHFDVQLMGGIVLHKGQIAEMKTGEGKTLVSTLPAYLNGLTGKGVHIVTVNDYLARRDAEWMGQVHRFLGLSVGLIQSGMSPEDRKKNYACDITYTTNSELGFDYLRDNMATSMAEVVQRPFNFCVIDEVDSILIDEARTPLIISGPIDRPTEKYIQASQIAKQLVKQEVEDGPGDYEVDEKARNILLTDEGYKKAEQLLGVKDLFDQDNPWAHYIFNAIKAKELFTKDVNYIVRGGEVVIVDEFTGRVLAGRRWSDGLHQAIEAKERVEIQQETQTLATITYQNFFLLYPKLSGMTGTAKTEETELEKVYNLQVTIIPTNRPSQRYDLPDAVYKAERGKWMAVAEEVEELHQKGRPILVGTTSVEKSELLSNLLRQKEIPHNLLNARPENVERESEIVAQAGRKGAVTIATNMAGRGTDIILGGNSDYMSRLKIREYLMPKLVKPEEDELAVNVPSLGGKRSRPQGFASDKKVKTWKASPDIFPTELSEETVKALKEAVKIAVDQHGQQSLGELEAEEKIAIASENAPTDDIVIQKLREVYKKIRAEYEIFTSKEHNEVVELGGLHVMGTERHESRRIDNQLRGRAGRQGDPGSTRFFLSLEDNLLKIFGGDRVARLMDALQVEEDMPIESGMLTRSLEGAQKKVETYYYDIRKQVFEYDEVMNNQRKAIYAERRRVLEGLDLKEQVLQYAEKTMDEIVEAYVNPDLPPEEWDLNTLVSKVKEFVYLLQDVAPSDIEDMTFMEMKNFLHEEVRKAYEVKEQEVDRVRPGLMRDAERFFILQQIDTLWREHLQGMESLRESIGLRGYGQKDPLIEYKQEGYEMFLEMMIDIRRNVVYSLFQFKPQGQPQAV.

ATP-binding positions include glutamine 90, glycine 108–threonine 112, and aspartate 504.

The protein belongs to the SecA family. As to quaternary structure, monomer and homodimer. Part of the essential Sec protein translocation apparatus which comprises SecA, SecYEG and auxiliary proteins SecDF. Other proteins may also be involved.

It is found in the cell inner membrane. The protein resides in the cellular thylakoid membrane. Its subcellular location is the cytoplasm. It catalyses the reaction ATP + H2O + cellular proteinSide 1 = ADP + phosphate + cellular proteinSide 2.. Functionally, part of the Sec protein translocase complex. Interacts with the SecYEG preprotein conducting channel. Has a central role in coupling the hydrolysis of ATP to the transfer of proteins into and across the cell membrane, serving as an ATP-driven molecular motor driving the stepwise translocation of polypeptide chains across the membrane. Probably participates in protein translocation into and across both the cytoplasmic and thylakoid membranes in cyanobacterial cells. The chain is Protein translocase subunit SecA from Gloeothece citriformis (strain PCC 7424) (Cyanothece sp. (strain PCC 7424)).